Reading from the N-terminus, the 134-residue chain is UPF0412 protein YaaI (134 aa).

Positions 1-23 are cleaved as a signal peptide; sequence MKSVFTISASLAISLMLCCTAQA.

The protein belongs to the UPF0412 family.

This Escherichia coli O157:H7 protein is UPF0412 protein YaaI.